We begin with the raw amino-acid sequence, 224 residues long: UPF0758 protein Tola_0183 (224 aa).

The MPN domain maps to 102–224 (SLTSPQLVRR…PVSFAERGWL (123 aa)). Zn(2+) is bound by residues H173, H175, and D186. Residues 173-186 (HNHPSGVAEPSHAD) carry the JAMM motif motif.

This sequence belongs to the UPF0758 family.

The polypeptide is UPF0758 protein Tola_0183 (Tolumonas auensis (strain DSM 9187 / NBRC 110442 / TA 4)).